Here is a 117-residue protein sequence, read N- to C-terminus: Large ribosomal subunit protein uL18 (117 aa).

Belongs to the universal ribosomal protein uL18 family. As to quaternary structure, part of the 50S ribosomal subunit; part of the 5S rRNA/L5/L18/L25 subcomplex. Contacts the 5S and 23S rRNAs.

This is one of the proteins that bind and probably mediate the attachment of the 5S RNA into the large ribosomal subunit, where it forms part of the central protuberance. The chain is Large ribosomal subunit protein uL18 from Klebsiella pneumoniae (strain 342).